Here is a 569-residue protein sequence, read N- to C-terminus: Cationic amino acid transporter 9, chloroplastic (569 aa).

Residues 1-41 constitute a chloroplast transit peptide; the sequence is MGGHEGFSNQRLSSATWFSHFRASALRSKSLPPPSSQTAVR. Transmembrane regions (helical) follow at residues 53–73, 81–101, 113–135, 155–175, 181–201, 215–235, 250–270, 284–304, 333–353, 406–428, 444–464, 467–487, 502–522, and 528–548; these read GLFDLILLGVGASIGAGVFVV, AGPGVTISFLLAGASCVLNAL, VVGGAYMYSYSAFNEITAFLVFV, YAVALLELFPALKGSIPLWMG, LGGLLSLNILAPILLALLTLV, VMTATKVVIVLVVICAGAFEI, AVLTGATVVFFSYVGFDAVAN, IGIMGSLLVCISLYIGVCLVL, ILISIGAVAGLTTTLLVGLYV, HILSVGTLTGYSVVAACVVALRL, WQEGVICLVIIACSGFGAGVF, FSASVIFILLSVGVAVVASAV, FSCPGVPIVPSVCIFFNIFLF, and EAWIRFVVVSVLATAVYALYG.

Belongs to the amino acid-polyamine-organocation (APC) superfamily. Cationic amino acid transporter (CAT) (TC 2.A.3.3) family. In terms of tissue distribution, expressed in roots, stems, flowers, and leaves.

The protein resides in the plastid. It localises to the chloroplast membrane. In terms of biological role, permease involved in the transport of the cationic amino acids. The sequence is that of Cationic amino acid transporter 9, chloroplastic (CAT9) from Arabidopsis thaliana (Mouse-ear cress).